The primary structure comprises 684 residues: MSAIPAEESDQLLIRPLGAGQEVGRSCIILEFKGRKIMLDCGIHPGLEGMDALPYIDLIDPAEIDLLLISHFHLDHCGALPWFLQKTSFKGRTFMTHATKAIYRWLLSDYVKVSNISADDMLYTETDLEESMDKIETINFHEVKEVAGIKFWCYHAGHVLGAAMFMIEIAGVKLLYTGDFSRQEDRHLMAAEIPNIKPDILIIESTYGTHIHEKREEREARFCNTVHDIVNRGGRGLIPVFALGRAQELLLILDEYWQNHPELHDIPIYYASSLAKKCMAVYQTYVNAMNDKIRKQININNPFVFKHISNLKSMDHFDDIGPSVVMASPGMIQNGLSRELFESWCTDKRNGVIIAGYCVEGTLAKHIMSEPEEITTMSGQKLPLKMSVDYISFSAHTDYQQTSEFIRALKPPHVILVHGEQNEMARLKAALIREYEDNDEVHIEVHNPRNTEAVTLNFRGEKLAKVMGFLADKKPEQGQRVSGILVKRNFNYHILSPCDLSNYTDLAMSTVKQTQAIPYTGPFYLLYYQLQKLTGDVEELEIQEKPALKVFKSITVVQEPGMVVLEWLANPSNDMYADTVTTVILEVQSNPKIRKGAVQKVSKKLEMHVYSKRLEVMLQDIFGEDCVSVKDDSVLSVTVDGKTANINLETRAVECEEGSEDDESLREMVELAAQRLYEALTPVH.

S2 is modified (N-acetylserine). H71, H73, D75, H76, H158, and D179 together coordinate Zn(2+). H396 (proton donor) is an active-site residue. Residue H418 coordinates Zn(2+). Glycyl lysine isopeptide (Lys-Gly) (interchain with G-Cter in SUMO) cross-links involve residues K462, K465, and K545. S659 bears the Phosphoserine mark. A Phosphothreonine modification is found at T681.

This sequence belongs to the metallo-beta-lactamase superfamily. RNA-metabolizing metallo-beta-lactamase-like family. CPSF3 subfamily. In terms of assembly, component of the cleavage and polyadenylation specificity factor (CPSF) complex, composed of CPSF1, CPSF2, CPSF3, CPSF4 and FIP1L1. Interacts with CPSF2, CSTF2 and SYMPK. Interacts with TUT1; the interaction is direct and mediates the recruitment of the CPSF complex on the 3'UTR of pre-mRNAs. Interacts with WDR33. Interacts with ZC3H3. Interacts with ISY1; this interaction is in an RNA independent manner. Interacts with the microprocessor complex subunits DGCR8 and DROSHA; this interaction is in an RNA dependent manner. Zn(2+) is required as a cofactor. In terms of processing, sumoylated on Lys-462, Lys-465 and Lys-545, preferentially by SUMO3.

Its subcellular location is the nucleus. Component of the cleavage and polyadenylation specificity factor (CPSF) complex that plays a key role in pre-mRNA 3'-end formation, recognizing the AAUAAA signal sequence and interacting with poly(A) polymerase and other factors to bring about cleavage and poly(A) addition. Has endonuclease activity, and functions as an mRNA 3'-end-processing endonuclease. Also involved in the histone 3'-end pre-mRNA processing. U7 snRNP-dependent protein that induces both the 3' endoribonucleolytic cleavage of histone pre-mRNAs and acts as a 5' to 3' exonuclease for degrading the subsequent downstream cleavage product (DCP) of mature histone mRNAs. Cleavage occurs after the 5'-ACCCA-3' sequence in the histone pre-mRNA leaving a 3'hydroxyl group on the upstream fragment containing the stem loop (SL) and 5' phosphate on the downstream cleavage product (DCP) starting with CU nucleotides. The U7-dependent 5' to 3' exonuclease activity is processive and degrades the DCP RNA substrate even after complete removal of the U7-binding site. Binds to the downstream cleavage product (DCP) of histone pre-mRNAs and the cleaved DCP RNA substrate in a U7 snRNP dependent manner. Required for the selective processing of microRNAs (miRNAs) during embryonic stem cell differentiation via its interaction with ISY1. Required for entering/progressing through S-phase of the cell cycle. Required for the biogenesis of all miRNAs from the pri-miR-17-92 primary transcript except miR-92a. Only required for the biogenesis of miR-290 and miR-96 from the pri-miR-290-295 and pri-miR-96-183 primary transcripts, respectively. This Mus musculus (Mouse) protein is Cleavage and polyadenylation specificity factor subunit 3 (Cpsf3).